The following is a 168-amino-acid chain: G/U mismatch-specific DNA glycosylase (168 aa).

It belongs to the uracil-DNA glycosylase (UDG) superfamily. TDG/mug family. Binds DNA as a monomer.

The protein resides in the cytoplasm. It carries out the reaction Specifically hydrolyzes mismatched double-stranded DNA and polynucleotides, releasing free uracil.. Excises ethenocytosine and uracil, which can arise by alkylation or deamination of cytosine, respectively, from the corresponding mispairs with guanine in ds-DNA. It is capable of hydrolyzing the carbon-nitrogen bond between the sugar-phosphate backbone of the DNA and the mispaired base. The complementary strand guanine functions in substrate recognition. Required for DNA damage lesion repair in stationary-phase cells. The protein is G/U mismatch-specific DNA glycosylase of Salmonella dublin (strain CT_02021853).